A 271-amino-acid polypeptide reads, in one-letter code: Acetyl-coenzyme A carboxylase carboxyl transferase subunit beta (271 aa).

One can recognise a CoA carboxyltransferase N-terminal domain in the interval 21 to 271 (LWIQCPYCKQ…LGDLLALHTA (251 aa)). The Zn(2+) site is built by Cys25, Cys28, Cys43, and Cys46. A C4-type zinc finger spans residues 25–46 (CPYCKQGSYRESLGNAQVCPHC).

This sequence belongs to the AccD/PCCB family. As to quaternary structure, acetyl-CoA carboxylase is a heterohexamer composed of biotin carboxyl carrier protein (AccB), biotin carboxylase (AccC) and two subunits each of ACCase subunit alpha (AccA) and ACCase subunit beta (AccD). It depends on Zn(2+) as a cofactor.

It localises to the cytoplasm. The enzyme catalyses N(6)-carboxybiotinyl-L-lysyl-[protein] + acetyl-CoA = N(6)-biotinyl-L-lysyl-[protein] + malonyl-CoA. The protein operates within lipid metabolism; malonyl-CoA biosynthesis; malonyl-CoA from acetyl-CoA: step 1/1. Functionally, component of the acetyl coenzyme A carboxylase (ACC) complex. Biotin carboxylase (BC) catalyzes the carboxylation of biotin on its carrier protein (BCCP) and then the CO(2) group is transferred by the transcarboxylase to acetyl-CoA to form malonyl-CoA. The chain is Acetyl-coenzyme A carboxylase carboxyl transferase subunit beta from Lacticaseibacillus casei (strain BL23) (Lactobacillus casei).